Reading from the N-terminus, the 707-residue chain is MPSATSHSGSGSKSSGPPPPSGSSGSEAAAGAAAPASQHPATGTGAVQTEAMKQILGVIDKKLRNLEKKKGKLDDYQERMNKGERLNQDQLDAVSKYQEVTNNLEFAKELQRSFMALSQDIQKTIKKTARREQLMREEAEQKRLKTVLELQYVLDKLGDDDVRTDLKQGLSGVPILSEEELSLLDEFYKLVDPERDMSLRLNEQYEHASIHLWDLLEGKEKPVCGTTYKALKEIVERVFQSNYFDSTHNHQNGLCEEEEAASAPTVEDQVAEAEPEPAEEYTEQSEVESTEYVNRQFMAETQFSSGEKEQVDEWTVETVEVVNSLQQQPQAASPSVPEPHSLTPVAQSDPLVRRQRVQDLMAQMQGPYNFIQDSMLDFENQTLDPAIVSAQPMNPTQNMDMPQLVCPQVHSESRLAQSNQVPVQPEATQVPLVSSTSEGYTASQPLYQPSHATEQRPQKEPMDQIQATISLNTDQTTASSSLPAASQPQVFQAGTSKPLHSSGINVNAAPFQSMQTVFNMNAPVPPANEPETLKQQSQYQATYNQSFSSQPHQVEQTELQQDQLQTVVGTYHGSQDQPHQVPGNHQQPPQQNTGFPRSSQPYYNSRGVSRGGSRGARGLMNGYRGPANGFRGGYDGYRPSFSNTPNSGYSQSQFTAPRDYSGYQRDGYQQNFKRGSGQSGPRGAPRGRGGPPRPNRGMPQMNTQQVN.

2 stretches are compositionally biased toward low complexity: residues 1-15 (MPSA…SKSS) and 22-43 (GSSG…PATG). Positions 1–48 (MPSATSHSGSGSKSSGPPPPSGSSGSEAAAGAAAPASQHPATGTGAVQ) are disordered. At P2 the chain carries N-acetylproline. At S10 the chain carries Phosphoserine. Residues 58 to 92 (VIDKKLRNLEKKKGKLDDYQERMNKGERLNQDQLD) adopt a coiled-coil conformation. Residue S113 is modified to Phosphoserine. The stretch at 123–151 (KTIKKTARREQLMREEAEQKRLKTVLELQ) forms a coiled coil. R163 is subject to Omega-N-methylarginine. Residues 325-335 (LQQQPQAASPS) are compositionally biased toward low complexity. The tract at residues 325–347 (LQQQPQAASPSVPEPHSLTPVAQ) is disordered. S333 and S341 each carry phosphoserine. The segment at 358–379 (QDLMAQMQGPYNFIQDSMLDFE) is G3BP1-binding. Disordered stretches follow at residues 412–496 (ESRL…AGTS), 526–558 (PANE…EQTE), and 570–707 (TYHG…QQVN). The span at 431–452 (PLVSSTSEGYTASQPLYQPSHA) shows a compositional bias: polar residues. A compositionally biased stretch (basic and acidic residues) spans 453-462 (TEQRPQKEPM). Residues 465-474 (IQATISLNTD) are compositionally biased toward polar residues. The segment covering 475–489 (QTTASSSLPAASQPQ) has biased composition (low complexity). Composition is skewed to polar residues over residues 533–552 (LKQQ…SQPH) and 572–603 (HGSQ…QPYY). A Phosphotyrosine modification is found at Y623. Residues R624 and R631 each carry the omega-N-methylarginine modification. A phosphotyrosine mark is found at Y634 and Y637. At R638 the chain carries Omega-N-methylarginine. Polar residues predominate over residues 640–655 (SFSNTPNSGYSQSQFT). S642 and S647 each carry an O-linked (GlcNAc) serine glycan. Residues Y649, Y660, Y663, and Y668 each carry the phosphotyrosine modification. Composition is skewed to low complexity over residues 674–684 (RGSGQSGPRGA) and 695–707 (NRGM…QQVN). An Asymmetric dimethylarginine; alternate modification is found at R696. Position 696 is an omega-N-methylarginine; alternate (R696).

The protein belongs to the caprin family. In terms of assembly, may form homomultimers. Interacts with G3BP1; interaction is direct and promotes stress granule formation. Interacts with G3BP2; interaction is direct and promotes stress granule formation. Interacts with PQBP1. Interacts with DDX3X. Interacts (when phosphorylated by EPHA4) with FMR1; interaction with FMR1 promotes formation of a membraneless compartment. Tyrosine phosphorylation by EPHA4 promotes interaction with FMR1 and liquid-liquid phase separation (LLPS) for the formation of a membraneless compartment that concentrates mRNAs with associated regulatory factors. Post-translationally, O-glycosylated (O-GlcNAcylated), in a cell cycle-dependent manner. O-glycosylation by OGT inhibit ability to undergo liquid-liquid phase separation (LLPS). In terms of tissue distribution, highest expression in thymus, spleen and brain (at protein level). Lower levels in kidney, muscle and liver (at protein level).

The protein resides in the cytoplasm. It is found in the cytoplasmic ribonucleoprotein granule. Its subcellular location is the cytosol. The protein localises to the cell projection. It localises to the dendrite. The protein resides in the lamellipodium. Ability to mediate liquid-liquid phase separation is regulated by ATP: moderate concentrations of ATP enhance phase separation, whereas high concentrations of ATP lead to inhibition of phase separation. Functionally, mRNA-binding protein that acts as a regulator of mRNAs transport, translation and/or stability, and which is involved in neurogenesis, synaptic plasticity in neurons and cell proliferation and migration in multiple cell types. Plays an essential role in cytoplasmic stress granule formation. Acts as an mRNA regulator by mediating formation of some phase-separated membraneless compartment: undergoes liquid-liquid phase separation upon binding to target mRNAs, leading to assemble mRNAs into cytoplasmic ribonucleoprotein granules that concentrate mRNAs with associated regulatory factors. Undergoes liquid-liquid phase separation following phosphorylation and interaction with FMR1, promoting formation of cytoplasmic ribonucleoprotein granules that concentrate mRNAs with factors that inhibit translation and mediate deadenylation of target mRNAs. In these cytoplasmic ribonucleoprotein granules, CAPRIN1 mediates recruitment of CNOT7 deadenylase, leading to mRNA deadenylation and degradation. Binds directly and selectively to MYC and CCND2 mRNAs. In neuronal cells, directly binds to several mRNAs associated with RNA granules, including BDNF, CAMK2A, CREB1, MAP2, NTRK2 mRNAs, as well as to GRIN1 and KPNB1 mRNAs, but not to rRNAs. This is Caprin-1 (Caprin1) from Mus musculus (Mouse).